The sequence spans 225 residues: Leucyl/phenylalanyl-tRNA--protein transferase (225 aa).

This sequence belongs to the L/F-transferase family.

The protein localises to the cytoplasm. The enzyme catalyses N-terminal L-lysyl-[protein] + L-leucyl-tRNA(Leu) = N-terminal L-leucyl-L-lysyl-[protein] + tRNA(Leu) + H(+). It carries out the reaction N-terminal L-arginyl-[protein] + L-leucyl-tRNA(Leu) = N-terminal L-leucyl-L-arginyl-[protein] + tRNA(Leu) + H(+). It catalyses the reaction L-phenylalanyl-tRNA(Phe) + an N-terminal L-alpha-aminoacyl-[protein] = an N-terminal L-phenylalanyl-L-alpha-aminoacyl-[protein] + tRNA(Phe). In terms of biological role, functions in the N-end rule pathway of protein degradation where it conjugates Leu, Phe and, less efficiently, Met from aminoacyl-tRNAs to the N-termini of proteins containing an N-terminal arginine or lysine. The polypeptide is Leucyl/phenylalanyl-tRNA--protein transferase (Nitrobacter hamburgensis (strain DSM 10229 / NCIMB 13809 / X14)).